A 622-amino-acid chain; its full sequence is uncharacterized protein (622 aa).

Basic and acidic residues predominate over residues 157 to 166 (LKESPLRDQQ). The disordered stretch occupies residues 157–238 (LKESPLRDQQ…GLPDHNSISE (82 aa)).

This is an uncharacterized protein from Homo sapiens (Human).